We begin with the raw amino-acid sequence, 317 residues long: Serine/threonine-protein phosphatase PP1 isozyme 1 (317 aa).

4 residues coordinate Mn(2+): aspartate 75, histidine 77, aspartate 103, and asparagine 135. Histidine 136 (proton donor) is an active-site residue. The Mn(2+) site is built by histidine 184 and histidine 259.

It belongs to the PPP phosphatase family. PP-1 subfamily. It depends on Mn(2+) as a cofactor.

It catalyses the reaction O-phospho-L-seryl-[protein] + H2O = L-seryl-[protein] + phosphate. The enzyme catalyses O-phospho-L-threonyl-[protein] + H2O = L-threonyl-[protein] + phosphate. In Nicotiana tabacum (Common tobacco), this protein is Serine/threonine-protein phosphatase PP1 isozyme 1 (NPP1).